The primary structure comprises 461 residues: Propanal dehydrogenase (CoA-propanoylating) (461 aa).

Residues 1–18 (MNTSELETLIRNILSEQL) are targets protein to the BMC.

The protein belongs to the EutE/PduP family. Interacts with PduK, probably with its BMC-containing N-terminus. Interacts with shell proteins PduA and PduJ, interacts with PduQ.

Its subcellular location is the bacterial microcompartment. It catalyses the reaction propanal + NAD(+) + CoA = propanoyl-CoA + NADH + H(+). It functions in the pathway polyol metabolism; 1,2-propanediol degradation. In terms of biological role, a CoA-acylating aldehyde dehydrogenase required for optimal 1,2-propanediol (1,2-PD) degradation. Optimizes growth in the bacterial microcompartment (BMC) dedicated to 1,2-PD degradation by minimizing propionaldehyde toxicity. NAD(+) and NADH are regenerated internally within the Pdu BMC by the PduP and PduQ enzymes, which reduce NAD(+) and oxidize NADH respectively, although there must also be cofactor transport across the BMC. Directly targeted to the BMC. Its function is as follows. Expression of a cosmid containing the full 21-gene pdu operon in E.coli allows E.coli to grow on 1,2-propanediol (1,2-PD) with the appearance of bacterial microcompartments (BMC) in its cytoplasm. The 1,2-PD-specific bacterial microcompartment (BMC) concentrates low levels of 1,2-PD catabolic enzymes, concentrates volatile reaction intermediates thus enhancing pathway flux and keeps the level of toxic, mutagenic propionaldehyde low. The protein is Propanal dehydrogenase (CoA-propanoylating) of Citrobacter freundii.